The primary structure comprises 196 residues: ATP-dependent Clp protease proteolytic subunit (196 aa).

Catalysis depends on Ser-101, which acts as the Nucleophile. Residue His-126 is part of the active site.

This sequence belongs to the peptidase S14 family. Component of the chloroplastic Clp protease core complex.

The protein resides in the plastid. The protein localises to the chloroplast stroma. It catalyses the reaction Hydrolysis of proteins to small peptides in the presence of ATP and magnesium. alpha-casein is the usual test substrate. In the absence of ATP, only oligopeptides shorter than five residues are hydrolyzed (such as succinyl-Leu-Tyr-|-NHMec, and Leu-Tyr-Leu-|-Tyr-Trp, in which cleavage of the -Tyr-|-Leu- and -Tyr-|-Trp bonds also occurs).. Cleaves peptides in various proteins in a process that requires ATP hydrolysis. Has a chymotrypsin-like activity. Plays a major role in the degradation of misfolded proteins. The protein is ATP-dependent Clp protease proteolytic subunit of Lactuca sativa (Garden lettuce).